A 991-amino-acid polypeptide reads, in one-letter code: KAT8 regulatory NSL complex subunit 1-like protein (991 aa).

A Glycyl lysine isopeptide (Lys-Gly) (interchain with G-Cter in SUMO2) cross-link involves residue K136. The tract at residues 443–462 (VNSQVPQRSEEPLPEHDFEM) is disordered. Over residues 450 to 461 (RSEEPLPEHDFE) the composition is skewed to basic and acidic residues. S463 bears the Phosphoserine mark. A compositionally biased stretch (polar residues) spans 749-763 (ANVTSRTQNPSSQNT). The segment at 749–770 (ANVTSRTQNPSSQNTSRRRLRS) is disordered. The PEHE domain occupies 798-919 (EILTPRWRKV…DGQEDKSLRW (122 aa)). K863 carries the post-translational modification N6-acetyllysine.

Acetylated on lysine residues by KAT8 upon ionizing radiation-induced DNA damage; deacetylated by HDAC3.

In Mus musculus (Mouse), this protein is KAT8 regulatory NSL complex subunit 1-like protein (Kansl1l).